The chain runs to 132 residues: Small ribosomal subunit protein uS9 (132 aa).

It belongs to the universal ribosomal protein uS9 family.

This Baumannia cicadellinicola subsp. Homalodisca coagulata protein is Small ribosomal subunit protein uS9.